The sequence spans 150 residues: MGIEIQTKPFGKMQVSERQILSFPEGLLGFEEYKKFALIEEEEESVFKWLQSTEEVDLAFVVIPPSLFKKEYKPLIPEQELLGIGINEIKESLTLVIVTVPGEDPSMMTANTQGPILINKETLIGKQFISRNESHSVREKILESAAVEIG.

The protein belongs to the FliW family. As to quaternary structure, interacts with translational regulator CsrA and flagellin(s).

The protein localises to the cytoplasm. In terms of biological role, acts as an anti-CsrA protein, binds CsrA and prevents it from repressing translation of its target genes, one of which is flagellin. Binds to flagellin and participates in the assembly of the flagellum. This is Flagellar assembly factor FliW from Leptospira interrogans serogroup Icterohaemorrhagiae serovar Lai (strain 56601).